The following is a 379-amino-acid chain: Leukocyte elastase inhibitor A (379 aa).

Phosphoserine is present on serine 300.

This sequence belongs to the serpin family. Ov-serpin subfamily. As to quaternary structure, monomer.

The protein resides in the secreted. It is found in the cytoplasm. Its subcellular location is the cytolytic granule. The protein localises to the early endosome. Regulates the activity of the neutrophil proteases. This chain is Leukocyte elastase inhibitor A (Serpinb1a), found in Rattus norvegicus (Rat).